The sequence spans 436 residues: 3-ketoacyl-CoA thiolase (436 aa).

The active-site Acyl-thioester intermediate is cysteine 99. Catalysis depends on proton acceptor residues histidine 392 and cysteine 422.

This sequence belongs to the thiolase-like superfamily. Thiolase family. In terms of assembly, heterotetramer of two alpha chains (FadJ) and two beta chains (FadI).

The protein resides in the cytoplasm. The enzyme catalyses an acyl-CoA + acetyl-CoA = a 3-oxoacyl-CoA + CoA. It functions in the pathway lipid metabolism; fatty acid beta-oxidation. Catalyzes the final step of fatty acid oxidation in which acetyl-CoA is released and the CoA ester of a fatty acid two carbons shorter is formed. The protein is 3-ketoacyl-CoA thiolase of Shewanella woodyi (strain ATCC 51908 / MS32).